The chain runs to 711 residues: Long-chain-fatty-acid--CoA ligase 4 (711 aa).

Residues 8–28 (LTIVLLPVHLLITIYSALIFI) form a helical; Signal-anchor for type III membrane protein membrane-spanning segment. Residues 29–711 (PWYFLTNAKK…KDIERMYGGK (683 aa)) lie on the Cytoplasmic side of the membrane. Ser447 is subject to Phosphoserine.

The protein belongs to the ATP-dependent AMP-binding enzyme family. The cofactor is Mg(2+).

It localises to the mitochondrion outer membrane. The protein resides in the peroxisome membrane. The protein localises to the microsome membrane. It is found in the endoplasmic reticulum membrane. Its subcellular location is the cell membrane. The enzyme catalyses a long-chain fatty acid + ATP + CoA = a long-chain fatty acyl-CoA + AMP + diphosphate. The catalysed reaction is (5Z,8Z,11Z,14Z)-eicosatetraenoate + ATP + CoA = (5Z,8Z,11Z,14Z)-eicosatetraenoyl-CoA + AMP + diphosphate. It catalyses the reaction 15-hydroxy-(5Z,8Z,11Z,13E)-eicosatetraenoate + ATP + CoA = 15-hydroxy-(5Z,8Z,11Z,13E)-eicosatetraenoyl-CoA + AMP + diphosphate. It carries out the reaction 12-hydroxy-(5Z,8Z,10E,14Z)-eicosatetraenoate + ATP + CoA = 12-hydroxy-(5Z,8Z,10E,14Z)-eicosatetraenoyl-CoA + AMP + diphosphate. The enzyme catalyses 5-hydroxy-(6E,8Z,11Z,14Z)-eicosatetraenoate + ATP + CoA = 5-hydroxy-(6E,8Z,11Z,14Z)-eicosatetraenoyl-CoA + AMP + diphosphate. The catalysed reaction is 5,6-epoxy-(8Z,11Z,14Z)-eicosatrienoate + ATP + CoA = 5,6-epoxy-(8Z,11Z,14Z)-eicosatrienoyl-CoA + AMP + diphosphate. It catalyses the reaction 14,15-epoxy-(5Z,8Z,11Z)-eicosatrienoate + ATP + CoA = 14,15-epoxy-(5Z,8Z,11Z)-eicosatrienoyl-CoA + AMP + diphosphate. It carries out the reaction 11,12-epoxy-(5Z,8Z,14Z)-eicosatrienoate + ATP + CoA = 11,12-epoxy-(5Z,8Z,14Z)-eicosatrienoyl-CoA + AMP + diphosphate. The enzyme catalyses 8,9-epoxy-(5Z,11Z,14Z)-eicosatrienoate + ATP + CoA = 8,9-epoxy-(5Z,11Z,14Z)-eicosatrienoyl-CoA + AMP + diphosphate. The catalysed reaction is hexadecanoate + ATP + CoA = hexadecanoyl-CoA + AMP + diphosphate. It catalyses the reaction (E)-hexadec-2-enoate + ATP + CoA = (2E)-hexadecenoyl-CoA + AMP + diphosphate. Both triacsin C and rosiglitazone inhibit arachidonoyl-CoA ligase activity. Functionally, catalyzes the conversion of long-chain fatty acids to their active form acyl-CoA for both synthesis of cellular lipids, and degradation via beta-oxidation. Preferentially activates arachidonate and eicosapentaenoate as substrates. Preferentially activates 8,9-EET &gt; 14,15-EET &gt; 5,6-EET &gt; 11,12-EET. Modulates glucose-stimulated insulin secretion by regulating the levels of unesterified EETs. Modulates prostaglandin E2 secretion. In Rattus norvegicus (Rat), this protein is Long-chain-fatty-acid--CoA ligase 4 (Acsl4).